Consider the following 344-residue polypeptide: Neurotrimin (344 aa).

Positions 1-33 are cleaved as a signal peptide; sequence MGVCGYLFLPWKCLVVVSLRLLFLVPTGVPVRS. Ig-like C2-type domains follow at residues 39–126, 136–218, and 222–309; these read PKAM…PKTS, PKIV…VKVT, and PPYI…ASIM. N-linked (GlcNAc...) asparagine glycosylation is found at Asn44, Asn70, and Asn152. Residues Cys57 and Cys115 are joined by a disulfide bond. Intrachain disulfides connect Cys157–Cys201 and Cys243–Cys295. N-linked (GlcNAc...) asparagine glycans are attached at residues Asn284, Asn292, and Asn305. Asn321 is lipidated: GPI-anchor amidated asparagine; alternate. Asn321 carries N-linked (GlcNAc...) asparagine; alternate glycosylation. The propeptide at 322–344 is removed in mature form; it reads GTSRRAGCIWLLPLLVLHLLLKF.

Belongs to the immunoglobulin superfamily. IgLON family.

It is found in the cell membrane. Its function is as follows. Neural cell adhesion molecule. This chain is Neurotrimin (Ntm), found in Mus musculus (Mouse).